The chain runs to 748 residues: MADSSGQQGKGRRVQPQWSPPAGTQPCRLHLYNSLTRNKEVFIPQDGKKVTWYCCGPTVYDASHMGHARSYISFDILRRVLKDYFKFDVFYCMNITDIDDKIIKRARQNHLFEQYREKRPEAAQLLEDVQAALKPFSVKLNETTDPDKKQMLERIQHAVQLATEPLEKAVQSRLTGEEVNSCVEVLLEEAKDLLSDWLDSTLGCDVTDNSIFSKLPKFWEGDFHRDMEALNVLPPDVLTRVSEYVPEIVNFVQKIVDNGYGYVSNGSVYFDTAKFASSEKHSYGKLVPEAVGDQKALQEGEGDLSISADRLSEKRSPNDFALWKASKPGEPSWPCPWGKGRPGWHIECSAMAGTLLGASMDIHGGGFDLRFPHHDNELAQSEAYFENDCWVRYFLHTGHLTIAGCKMSKSLKNFITIKDALKKHSARQLRLAFLMHSWKDTLDYSSNTMESALQYEKFLNEFFLNVKDILRAPVDITGQFEKWGEEEAELNKNFYDKKTAIHKALCDNVDTRTVMEEMRALVSQCNLYMAARKAVRKRPNQALLENIALYLTHMLKIFGAVEEDSSLGFPVGGPGTSLSLEATVMPYLQVLSEFREGVRKIAREQKVPEILQLSDALRDNILPELGVRFEDHEGLPTVVKLVDRNTLLKEREEKRRVEEEKRKKKEEAARRKQEQEAAKLAKMKIPPSEMFLSETDKYSKFDENGLPTHDMEGKELSKGQAKKLKKLFEAQEKLYKEYLQMAQNGSFQ.

The interval 1-25 (MADSSGQQGKGRRVQPQWSPPAGTQ) is disordered. Ala-2 carries the N-acetylalanine modification. Ser-19 is subject to Phosphoserine. Cys-55 is a binding site for Zn(2+). L-cysteine is bound at residue Gly-56. Positions 57-67 (PTVYDASHMGH) match the 'HIGH' region motif. Arg-79 is subject to Phosphoserine. Thr-96 is an L-cysteine binding site. A 'KIIK' region motif is present at residues 101–104 (KIIK). Residues Ser-305 and Ser-307 each carry the phosphoserine modification. Zn(2+) contacts are provided by Cys-348, His-373, and Glu-377. His-373 lines the L-cysteine pocket. The 'KMSKS' region motif lies at 406-410 (KMSKS). Lys-409 serves as a coordination point for ATP. An N6-acetyllysine modification is found at Lys-503. A compositionally biased stretch (basic and acidic residues) spans 653-679 (EKRRVEEEKRKKKEEAARRKQEQEAAK). Residues 653-686 (EKRRVEEEKRKKKEEAARRKQEQEAAKLAKMKIP) are disordered. Ser-746 bears the Phosphoserine mark.

This sequence belongs to the class-I aminoacyl-tRNA synthetase family. In terms of assembly, homodimer. Zn(2+) serves as cofactor.

The protein localises to the cytoplasm. The catalysed reaction is tRNA(Cys) + L-cysteine + ATP = L-cysteinyl-tRNA(Cys) + AMP + diphosphate. Its function is as follows. Catalyzes the ATP-dependent ligation of cysteine to tRNA(Cys). This is Cysteine--tRNA ligase, cytoplasmic from Homo sapiens (Human).